The following is a 708-amino-acid chain: Prolyl 3-hydroxylase 2 (708 aa).

Residues 1 to 24 form the signal peptide; it reads MRERIWAPPLLLLLPLLLPPPLWG. TPR repeat units follow at residues 44–77, 148–181, 210–243, and 306–339; these read FDLL…HRRL, RVPY…NPEH, HMES…YFVE, and PLHY…HPDD. Asn-449 and Asn-549 each carry an N-linked (GlcNAc...) asparagine glycan. One can recognise a Fe2OG dioxygenase domain in the interval 557 to 671; sequence THMVCRTALS…RCAVALWFTL (115 aa). Fe cation is bound by residues His-580, Asp-582, and His-652. Arg-662 is a catalytic residue. The Prevents secretion from ER signature appears at 705 to 708; it reads KDEL.

This sequence belongs to the leprecan family. Requires Fe cation as cofactor. L-ascorbate serves as cofactor. In terms of tissue distribution, expression localized to the epithelia of bile ducts and to the sacroplasm of heart muscle and skeletal muscle. In the pancreas, localized to a subpopulation of Langerhans islet cells and in the salivary gland, expressed in acinar cells (at protein level). Expressed in adult heart, placenta, lung, liver, skeletal muscle and kidney. Detected in fetal heart, spleen, lung, liver skeletal muscle and kidney.

It is found in the endoplasmic reticulum. Its subcellular location is the sarcoplasmic reticulum. The protein resides in the golgi apparatus. It carries out the reaction L-prolyl-[collagen] + 2-oxoglutarate + O2 = trans-3-hydroxy-L-prolyl-[collagen] + succinate + CO2. With respect to regulation, inhibited by pyridine 2,4-dicarboxylate, an analog of 2-oxoglutarate. Functionally, prolyl 3-hydroxylase that catalyzes the post-translational formation of 3-hydroxyproline on collagens. Contributes to proline 3-hydroxylation of collagen COL4A1 and COL1A1 in tendons, the eye sclera and in the eye lens capsule. Has high activity with the type IV collagen COL4A1, and lower activity with COL1A1. Catalyzes hydroxylation of the first Pro in Gly-Pro-Hyp sequences where Hyp is 4-hydroxyproline. Has no activity on substrates that lack 4-hydroxyproline in the third position. This Homo sapiens (Human) protein is Prolyl 3-hydroxylase 2.